Reading from the N-terminus, the 1683-residue chain is ABC transporter 7 (1683 aa).

Residues 24–44 (DYLRILLPAVVIGLSVLNLGF) traverse the membrane as a helical segment. The interval 53–93 (RSKSPSTHAYAPVSNGDNSRPGAHRTDISPDDDAIAQDDED) is disordered. Positions 81-93 (SPDDDAIAQDDED) are enriched in acidic residues. 4 helical membrane-spanning segments follow: residues 127–147 (LSVV…VIAL), 157–177 (TLTG…LATL), 190–210 (HLWN…IGIF), and 221–241 (LAQI…FMAI). N-linked (GlcNAc...) asparagine glycosylation is present at N247. 2 helical membrane passes run 336–356 (GWAV…KAIL) and 368–388 (SVVW…SLGD). In terms of domain architecture, ABC transmembrane type-1 1 spans 338–664 (AVMSGMFTFA…LGDMLAHVQE (327 aa)). A disordered region spans residues 451-473 (GDNDESEDGKDGDKDKEDSSDEQ). N489 carries an N-linked (GlcNAc...) asparagine glycan. Transmembrane regions (helical) follow at residues 496–516 (YLHF…VLLY) and 518–538 (VLGM…PVNI). N545 carries N-linked (GlcNAc...) asparagine glycosylation. 2 helical membrane-spanning segments follow: residues 602–622 (VWAC…FFSF) and 632–648 (PLHP…FMLL). The ABC transporter 1 domain occupies 700-949 (IALKDAAFIW…GALGEEIAQK (250 aa)). 742-749 (GPTGSGKT) provides a ligand contact to ATP. Positions 952–998 (SETPNISRIPSRVPSSVGEGSGNTLLDTDGDDHLSKPKNAKKAKKAE) are disordered. A glycan (N-linked (GlcNAc...) asparagine) is linked at N956. Residues 1016–1036 (LYLASMGSWWFWVVAGCIFIS) traverse the membrane as a helical segment. Residues 1028 to 1351 (VVAGCIFISQ…NILWLVRLYS (324 aa)) form the ABC transmembrane type-1 2 domain. N1097 is a glycosylation site (N-linked (GlcNAc...) asparagine). The next 3 helical transmembrane spans lie at 1111 to 1131 (AQYY…TAFL), 1182 to 1202 (VDQE…GITV), and 1204 to 1224 (VVLI…ITIA). N1277 carries an N-linked (GlcNAc...) asparagine glycan. 2 consecutive transmembrane segments (helical) span residues 1304–1324 (LLGD…IGVI) and 1327–1347 (GWAG…LWLV). Residues 1392–1649 (VEFINYTTSY…GEGGSFKSMC (258 aa)) form the ABC transporter 2 domain. N-linked (GlcNAc...) asparagine glycosylation is found at N1396 and N1411. 1426–1433 (GRTGAGKS) is an ATP binding site. Residues N1541 and N1552 are each glycosylated (N-linked (GlcNAc...) asparagine).

This sequence belongs to the ABC transporter superfamily.

It localises to the membrane. Its function is as follows. ABC transporter; part of the gene cluster that mediates the biosynthesis of pyriculol and pyriculariol, two heptaketides that induce lesion formation upon application on rice leaves but are dispensable for pathogenicity. With the MFS transporter MFS1, is most likely responsible for pyriculol and pyriculariol secretion and thereby may contribute to intrinsic resistance. The chain is ABC transporter 7 from Pyricularia oryzae (strain 70-15 / ATCC MYA-4617 / FGSC 8958) (Rice blast fungus).